The chain runs to 516 residues: Nondiscriminating glutamyl-tRNA synthetase EARS2, mitochondrial (516 aa).

The transit peptide at methionine 1–phenylalanine 39 directs the protein to the mitochondrion. Arginine 38–alanine 40 contributes to the L-glutamate binding site. The short motif at proline 43–glycine 51 is the 'HIGH' region element. Histidine 48 provides a ligand contact to ATP. Residues glutamate 74, tyrosine 226–asparagine 230, and arginine 244 contribute to the L-glutamate site. ATP-binding positions include glutamate 247 and lysine 282–arginine 286. Positions lysine 282–arginine 286 match the 'KMSKS' region motif.

This sequence belongs to the class-I aminoacyl-tRNA synthetase family. Glutamate--tRNA ligase type 1 subfamily.

Its subcellular location is the mitochondrion matrix. The enzyme catalyses tRNA(Glx) + L-glutamate + ATP = L-glutamyl-tRNA(Glx) + AMP + diphosphate. The catalysed reaction is tRNA(Glu) + L-glutamate + ATP = L-glutamyl-tRNA(Glu) + AMP + diphosphate. It carries out the reaction tRNA(Gln) + L-glutamate + ATP = L-glutamyl-tRNA(Gln) + AMP + diphosphate. Its function is as follows. Non-discriminating glutamyl-tRNA synthetase that catalyzes aminoacylation of both mitochondrial tRNA(Glu) and tRNA(Gln) and participates in RNA aminoacylation for mitochondrial protein translation. Attachs glutamate to tRNA(Glu) or tRNA(Gln) in a two-step reaction: glutamate is first activated by ATP to form Glu-AMP and then transferred to the acceptor end of tRNA(Glu) or tRNA(Gln). The sequence is that of Nondiscriminating glutamyl-tRNA synthetase EARS2, mitochondrial from Xenopus tropicalis (Western clawed frog).